A 330-amino-acid polypeptide reads, in one-letter code: Transcription factor TGA6 (330 aa).

The segment covering Met-1 to Asp-13 has biased composition (polar residues). A disordered region spans residues Met-1–Gln-45. Basic and acidic residues-rich tracts occupy residues Asp-15 to His-27 and Ser-35 to Gln-45. Residues Asp-44–Gly-107 enclose the bZIP domain. 2 coiled-coil regions span residues Gln-45–Asp-142 and Ile-217–Gln-233. Residues Lys-46–Lys-66 form a basic motif region. Positions Leu-72–Leu-86 are leucine-zipper. A DOG1 domain is found at Ala-111 to Arg-327.

The protein belongs to the bZIP family. In terms of assembly, binds DNA as a dimer. Interacts with NPR1, NPR3 and NPR4. Interacts with GRXC9/GRX480. In terms of tissue distribution, expressed predominantly in roots and flowers.

Its subcellular location is the nucleus. Its function is as follows. Transcriptional activator that binds specifically to the DNA sequence 5'-TGACG-3'. Recognizes ocs elements like the as-1 motif of the cauliflower mosaic virus 35S promoter. Binding to the as-1-like cis elements mediate auxin- and salicylic acid-inducible transcription. May be involved in the induction of the systemic acquired resistance (SAR) via its interaction with NPR1. Could also bind to the Hex-motif (5'-TGACGTGG-3') another cis-acting element found in plant histone promoters. The chain is Transcription factor TGA6 (TGA6) from Arabidopsis thaliana (Mouse-ear cress).